Consider the following 33-residue polypeptide: Gastrin (33 aa).

Residue Gln1 is modified to Pyrrolidone carboxylic acid. A Sulfotyrosine modification is found at Tyr28. Residue Phe33 is modified to Phenylalanine amide.

This sequence belongs to the gastrin/cholecystokinin family. In terms of processing, sulfation enhances proteolytic processing, and blocks peptide degradation. Levels of sulfation differ between proteolytically-cleaved gastrins and between tissues.

It localises to the secreted. In terms of biological role, gastrin stimulates the stomach mucosa to produce and secrete hydrochloric acid and the pancreas to secrete its digestive enzymes. It also stimulates smooth muscle contraction and increases blood circulation and water secretion in the stomach and intestine. The polypeptide is Gastrin (GAST) (Macropus giganteus (Eastern gray kangaroo)).